Reading from the N-terminus, the 443-residue chain is Proline--tRNA ligase (443 aa).

It belongs to the class-II aminoacyl-tRNA synthetase family. ProS type 2 subfamily. As to quaternary structure, homodimer.

The protein resides in the cytoplasm. It carries out the reaction tRNA(Pro) + L-proline + ATP = L-prolyl-tRNA(Pro) + AMP + diphosphate. Catalyzes the attachment of proline to tRNA(Pro) in a two-step reaction: proline is first activated by ATP to form Pro-AMP and then transferred to the acceptor end of tRNA(Pro). The protein is Proline--tRNA ligase of Caulobacter vibrioides (strain ATCC 19089 / CIP 103742 / CB 15) (Caulobacter crescentus).